The primary structure comprises 135 residues: HTH-type transcriptional regulator CueR (135 aa).

In terms of domain architecture, HTH merR-type spans 1–69; it reads MNISDVAKIT…LEESGELVNL (69 aa). Residues 4-23 constitute a DNA-binding region (H-T-H motif); that stretch reads SDVAKITGLTSKAIRFYEEK. The Cu(+) site is built by C112 and C120.

As to quaternary structure, homodimer.

It localises to the cytoplasm. In terms of biological role, regulates the transcription of the copA and cueO genes. It detects cytoplasmic copper stress and activates transcription in response to increasing copper concentrations. This is HTH-type transcriptional regulator CueR (cueR) from Escherichia coli O6:H1 (strain CFT073 / ATCC 700928 / UPEC).